The following is a 602-amino-acid chain: DNA mismatch repair protein MutL (602 aa).

A disordered region spans residues 337 to 367; the sequence is KRPFPGSSTNYSGIQQDTKKQESDNPEKARG. Over residues 342–352 the composition is skewed to polar residues; that stretch reads GSSTNYSGIQQ. Residues 353 to 367 are compositionally biased toward basic and acidic residues; it reads DTKKQESDNPEKARG.

The protein belongs to the DNA mismatch repair MutL/HexB family.

Functionally, this protein is involved in the repair of mismatches in DNA. It is required for dam-dependent methyl-directed DNA mismatch repair. May act as a 'molecular matchmaker', a protein that promotes the formation of a stable complex between two or more DNA-binding proteins in an ATP-dependent manner without itself being part of a final effector complex. This chain is DNA mismatch repair protein MutL, found in Kosmotoga olearia (strain ATCC BAA-1733 / DSM 21960 / TBF 19.5.1).